A 160-amino-acid chain; its full sequence is UPF0479 membrane protein YLL066W-A (160 aa).

Helical transmembrane passes span 39-59 (IVFC…KVLQ) and 136-156 (VPMI…ISQH).

Belongs to the UPF0479 family.

It is found in the membrane. The polypeptide is UPF0479 membrane protein YLL066W-A (Saccharomyces cerevisiae (strain ATCC 204508 / S288c) (Baker's yeast)).